A 145-amino-acid polypeptide reads, in one-letter code: 3-hydroxyacyl-[acyl-carrier-protein] dehydratase FabZ (145 aa).

His49 is a catalytic residue.

The protein belongs to the thioester dehydratase family. FabZ subfamily.

It localises to the cytoplasm. The catalysed reaction is a (3R)-hydroxyacyl-[ACP] = a (2E)-enoyl-[ACP] + H2O. Functionally, involved in unsaturated fatty acids biosynthesis. Catalyzes the dehydration of short chain beta-hydroxyacyl-ACPs and long chain saturated and unsaturated beta-hydroxyacyl-ACPs. This chain is 3-hydroxyacyl-[acyl-carrier-protein] dehydratase FabZ, found in Rickettsia conorii (strain ATCC VR-613 / Malish 7).